Consider the following 136-residue polypeptide: Aspartate 1-decarboxylase (136 aa).

The Schiff-base intermediate with substrate; via pyruvic acid role is filled by Ser25. Position 25 is a pyruvic acid (Ser) (Ser25). Thr57 lines the substrate pocket. Tyr58 functions as the Proton donor in the catalytic mechanism. Gly73–Ala75 provides a ligand contact to substrate.

Belongs to the PanD family. In terms of assembly, heterooctamer of four alpha and four beta subunits. It depends on pyruvate as a cofactor. Post-translationally, is synthesized initially as an inactive proenzyme, which is activated by self-cleavage at a specific serine bond to produce a beta-subunit with a hydroxyl group at its C-terminus and an alpha-subunit with a pyruvoyl group at its N-terminus.

It localises to the cytoplasm. It catalyses the reaction L-aspartate + H(+) = beta-alanine + CO2. It participates in cofactor biosynthesis; (R)-pantothenate biosynthesis; beta-alanine from L-aspartate: step 1/1. Functionally, catalyzes the pyruvoyl-dependent decarboxylation of aspartate to produce beta-alanine. The polypeptide is Aspartate 1-decarboxylase (Mycolicibacterium smegmatis (strain ATCC 700084 / mc(2)155) (Mycobacterium smegmatis)).